The sequence spans 329 residues: Glycerol-3-phosphate dehydrogenase [NAD(P)+] (329 aa).

The NADPH site is built by tryptophan 11, arginine 30, and lysine 103. Sn-glycerol 3-phosphate contacts are provided by lysine 103, glycine 132, and serine 134. Alanine 136 contributes to the NADPH binding site. Sn-glycerol 3-phosphate contacts are provided by lysine 187, aspartate 240, serine 250, arginine 251, and asparagine 252. Lysine 187 functions as the Proton acceptor in the catalytic mechanism. Arginine 251 contributes to the NADPH binding site. Residues valine 275 and glutamate 277 each coordinate NADPH.

It belongs to the NAD-dependent glycerol-3-phosphate dehydrogenase family.

It localises to the cytoplasm. It carries out the reaction sn-glycerol 3-phosphate + NAD(+) = dihydroxyacetone phosphate + NADH + H(+). It catalyses the reaction sn-glycerol 3-phosphate + NADP(+) = dihydroxyacetone phosphate + NADPH + H(+). It participates in membrane lipid metabolism; glycerophospholipid metabolism. Catalyzes the reduction of the glycolytic intermediate dihydroxyacetone phosphate (DHAP) to sn-glycerol 3-phosphate (G3P), the key precursor for phospholipid synthesis. In Nitrosomonas europaea (strain ATCC 19718 / CIP 103999 / KCTC 2705 / NBRC 14298), this protein is Glycerol-3-phosphate dehydrogenase [NAD(P)+].